A 346-amino-acid polypeptide reads, in one-letter code: DNA repair protein XRCC3 (346 aa).

At methionine 1 the chain carries N-acetylmethionine. 107-114 serves as a coordination point for ATP; it reads GRSSAGKT.

The protein belongs to the RecA family. RAD51 subfamily. As to quaternary structure, interacts with RAD51C and RAD51. Part of the CX3 complex consisting of RAD51C and XRCC3; the complex has a ring-like structure arranged into a flat disk around a central channel; CX3 can interact with RAD51 in vitro. Forms a complex with FANCD2, BRCA2 and phosphorylated FANCG. Interacts with SWSAP1 and ZSWIM7; involved in homologous recombination repair. Interacts directly with PALB2 which may serve as a scaffold for a HR complex containing PALB2, BRCA2, RAD51C, RAD51 and XRCC3.

It is found in the nucleus. The protein resides in the cytoplasm. It localises to the perinuclear region. The protein localises to the mitochondrion. Involved in the homologous recombination repair (HRR) pathway of double-stranded DNA, thought to repair chromosomal fragmentation, translocations and deletions. Part of the RAD51 paralog protein complex CX3 which acts in the BRCA1-BRCA2-dependent HR pathway. Upon DNA damage, CX3 acts downstream of RAD51 recruitment; the complex binds predominantly to the intersection of the four duplex arms of the Holliday junction (HJ) and to junctions of replication forks. Involved in HJ resolution and thus in processing HR intermediates late in the DNA repair process; the function may be linked to the CX3 complex and seems to involve GEN1 during mitotic cell cycle progression. Part of a PALB2-scaffolded HR complex containing BRCA2 and RAD51C and which is thought to play a role in DNA repair by HR. Plays a role in regulating mitochondrial DNA copy number under conditions of oxidative stress in the presence of RAD51 and RAD51C. This chain is DNA repair protein XRCC3 (XRCC3), found in Homo sapiens (Human).